The sequence spans 630 residues: Zinc finger protein 37 homolog (630 aa).

3 disordered regions span residues 1–45 (MSVS…SAAE), 77–172 (KPDM…PSKK), and 193–285 (HSRN…KHEK). The span at 14-30 (ETVDRRRSAETTKEAGR) shows a compositional bias: basic and acidic residues. Positions 32–103 (LEMAVSEPEA…KGKRPSQGCP (72 aa)) constitute a KRAB domain. Residue S42 is modified to Phosphoserine. Over residues 110–122 (KQKETDGKVQKDD) the composition is skewed to basic and acidic residues. A compositionally biased stretch (basic residues) spans 161 to 172 (NNLHKKHVPSKK). Basic and acidic residues predominate over residues 193 to 206 (HSRNCVKRKSDAAK). Residues 221–231 (KGKKQTGKKHE) are compositionally biased toward basic residues. 2 stretches are compositionally biased toward basic and acidic residues: residues 232–243 (KLSSHSSSDKCN) and 260–274 (IKQD…HEKS). C2H2-type zinc fingers lie at residues 293–315 (YECN…QRVH) and 321–343 (YECN…QRTH). A C2H2-type 3; atypical zinc finger spans residues 349–367 (YECIQCGKAHGHKHALTDH). C2H2-type zinc fingers lie at residues 377-399 (YECA…VRSH), 405-427 (YECK…VRTH), 433-455 (YECN…MRIH), 461-483 (FECN…QRTH), 489-511 (YKCN…MRTH), 517-539 (FECN…QRVH), 545-567 (YECN…QRTH), 573-595 (YECN…QRSH), and 601-623 (YECN…VKTH).

It belongs to the krueppel C2H2-type zinc-finger protein family. In terms of tissue distribution, expressed at low level in several tissues including fetal cartilage.

The protein resides in the nucleus. May be involved in transcriptional regulation. This Homo sapiens (Human) protein is Zinc finger protein 37 homolog (ZFP37).